Reading from the N-terminus, the 56-residue chain is uncharacterized protein (56 aa).

This is an uncharacterized protein from Bacillus subtilis (strain 168).